The following is a 233-amino-acid chain: Small ribosomal subunit protein uS2 (233 aa).

It belongs to the universal ribosomal protein uS2 family.

The polypeptide is Small ribosomal subunit protein uS2 (Clostridium botulinum (strain Hall / ATCC 3502 / NCTC 13319 / Type A)).